Here is a 346-residue protein sequence, read N- to C-terminus: Inositol 2-dehydrogenase/D-chiro-inositol 3-dehydrogenase (346 aa).

Basic and acidic residues predominate over residues 322–331; that stretch reads GREESIELPK. The disordered stretch occupies residues 322 to 346; it reads GREESIELPKKPAFYQHSAATPEQV.

The protein belongs to the Gfo/Idh/MocA family. As to quaternary structure, homotetramer.

It catalyses the reaction myo-inositol + NAD(+) = scyllo-inosose + NADH + H(+). The catalysed reaction is 1D-chiro-inositol + NAD(+) = scyllo-inosine + NADH + H(+). It functions in the pathway polyol metabolism; myo-inositol degradation into acetyl-CoA; acetyl-CoA from myo-inositol: step 1/7. Functionally, involved in the oxidation of myo-inositol (MI) and D-chiro-inositol (DCI) to 2-keto-myo-inositol (2KMI or 2-inosose) and 1-keto-D-chiro-inositol (1KDCI), respectively. The sequence is that of Inositol 2-dehydrogenase/D-chiro-inositol 3-dehydrogenase from Shouchella clausii (strain KSM-K16) (Alkalihalobacillus clausii).